A 288-amino-acid chain; its full sequence is MASITGQLSPMYINNVNTRSAYQPYIPVLERFDPRDLEVPKGVFVPLSGAMYFPTVHGMSLPQRRPLGLVQTGGLMSEPMTVDVVPGKLYTVLNTGCDTLRVGDHFMVQFPQPEDTDAQLRASKKPGTRRICNAASFNRMLPLWGGFMAVKKIDPIVPRELMHQLTRDVVTARSSELLYGLAGVYDLVEKTSAAARGVFKDIAEKKAVTKEEVVAAMTADQVDIFRKIVDEFSTMLNCVNFATIGMYHSSTLANPTPSLSQNQVWCNTDGVTEPGLQFHAFIKQFSGV.

This is an uncharacterized protein from Ictaluridae (bullhead catfishes).